We begin with the raw amino-acid sequence, 413 residues long: Arginine biosynthesis bifunctional protein ArgJ 1 (413 aa).

Residues T154, K180, T191, E277, N408, and T413 each coordinate substrate. T191 acts as the Nucleophile in catalysis.

Belongs to the ArgJ family. As to quaternary structure, heterotetramer of two alpha and two beta chains.

The protein resides in the cytoplasm. It carries out the reaction N(2)-acetyl-L-ornithine + L-glutamate = N-acetyl-L-glutamate + L-ornithine. The enzyme catalyses L-glutamate + acetyl-CoA = N-acetyl-L-glutamate + CoA + H(+). Its pathway is amino-acid biosynthesis; L-arginine biosynthesis; L-ornithine and N-acetyl-L-glutamate from L-glutamate and N(2)-acetyl-L-ornithine (cyclic): step 1/1. It participates in amino-acid biosynthesis; L-arginine biosynthesis; N(2)-acetyl-L-ornithine from L-glutamate: step 1/4. Catalyzes two activities which are involved in the cyclic version of arginine biosynthesis: the synthesis of N-acetylglutamate from glutamate and acetyl-CoA as the acetyl donor, and of ornithine by transacetylation between N(2)-acetylornithine and glutamate. The sequence is that of Arginine biosynthesis bifunctional protein ArgJ 1 from Nostoc sp. (strain PCC 7120 / SAG 25.82 / UTEX 2576).